A 140-amino-acid polypeptide reads, in one-letter code: ATP synthase epsilon chain (140 aa).

The protein belongs to the ATPase epsilon chain family. F-type ATPases have 2 components, CF(1) - the catalytic core - and CF(0) - the membrane proton channel. CF(1) has five subunits: alpha(3), beta(3), gamma(1), delta(1), epsilon(1). CF(0) has three main subunits: a, b and c.

The protein localises to the cell inner membrane. Produces ATP from ADP in the presence of a proton gradient across the membrane. This chain is ATP synthase epsilon chain, found in Xanthomonas campestris pv. campestris (strain 8004).